The primary structure comprises 137 residues: MAYCRQEGKDRIIFVTKEDHETPSNAELVADDPNDPYEEHGLILPNGDINWNCPCLGGMASGPCGEQFKAAFSCFHYSKEDVKGSDCVDQFRAMQECMQKYPDLYPQEEEEEEEQPADPLPEAASEASATKEAAASS.

3 disulfides stabilise this stretch: Cys53/Cys55, Cys64/Cys97, and Cys74/Cys87. Residues 61 to 105 (SGPCGEQFKAAFSCFHYSKEDVKGSDCVDQFRAMQECMQKYPDLY) form the CHCH domain. 2 consecutive short sequence motifs (cx9C motif) follow at residues 64-74 (CGEQFKAAFSC) and 87-97 (CVDQFRAMQEC). The interval 102-137 (PDLYPQEEEEEEEQPADPLPEAASEASATKEAAASS) is disordered. Positions 106-116 (PQEEEEEEEQP) are enriched in acidic residues. Over residues 120 to 137 (LPEAASEASATKEAAASS) the composition is skewed to low complexity.

In terms of assembly, monomer. Can form homooligomers. Interacts with GFER and forms transient disulfide bonds with GFER. Interacts with MICU1. Interacts with COX19 forming transient intermolecular disulfide bridges. Interacts with COA7 through transient intermolecular disulfide bonds. Interacts with AIFM1; the interaction increases in presence of NADH. Interacts with NDUFB10. Forms intrachain disulfide bridges, but exists in different redox states.

It localises to the mitochondrion intermembrane space. Central component of a redox-sensitive mitochondrial intermembrane space import machinery which is required for the biogenesis of respiratory chain complexes. Functions as a chaperone and catalyzes the formation of disulfide bonds in substrate proteins, such as COX17, COX19, MICU1 and COA7. Required for the import and folding of small cysteine-containing proteins (small Tim) in the mitochondrial intermembrane space (IMS). Required for the import of COA7 in the IMS. Precursor proteins to be imported into the IMS are translocated in their reduced form into the mitochondria. The oxidized form of CHCHD4/MIA40 forms a transient intermolecular disulfide bridge with the reduced precursor protein, resulting in oxidation of the precursor protein that now contains an intramolecular disulfide bond and is able to undergo folding in the IMS. Reduced CHCHD4/MIA40 is then reoxidized by GFER/ERV1 via a disulfide relay system. Mediates formation of disulfide bond in MICU1 in the IMS, promoting formation of the MICU1-MICU2 heterodimer that regulates mitochondrial calcium uptake. The chain is Mitochondrial intermembrane space import and assembly protein 40 (CHCHD4) from Bos taurus (Bovine).